The primary structure comprises 538 residues: Putative cysteine ligase BshC (538 aa).

The stretch at 454–482 forms a coiled coil; the sequence is LEKNAGFIQDQLQFLEKTVIRRIEEKENY.

The protein belongs to the BshC family.

Functionally, involved in bacillithiol (BSH) biosynthesis. May catalyze the last step of the pathway, the addition of cysteine to glucosamine malate (GlcN-Mal) to generate BSH. This is Putative cysteine ligase BshC from Bacillus licheniformis (strain ATCC 14580 / DSM 13 / JCM 2505 / CCUG 7422 / NBRC 12200 / NCIMB 9375 / NCTC 10341 / NRRL NRS-1264 / Gibson 46).